Consider the following 247-residue polypeptide: MTGALCIVLFGVTMVTAERPKIKDTHGNLLVKLSDIPIGSCGDESYFGLGIMDGGLEECDRWKLEVTNPEYEEYKCKVLRVHASVQNGKCTCNINWKGPICNEYDGCGKGETLFGTSCTPHMCQHNGTIAVGKKEIECICPPPWDGRFCERLACWRKTISTQQHRYRNNGDHCICGNHYSGASCDVIKSCLNNGQLIDGKCKCPDGYYGDLCDKRCQKGHVTCSTCSSFIPAALFAIILLCVNKFNY.

Positions 1–17 (MTGALCIVLFGVTMVTA) are cleaved as a signal peptide. At 18-220 (ERPKIKDTHG…LCDKRCQKGH (203 aa)) the chain is on the extracellular side. 2 consecutive EGF-like domains span residues 114–150 (FGTS…RFCE) and 180–213 (SGAS…DLCD). Disulfide bonds link cysteine 123/cysteine 138, cysteine 140/cysteine 149, cysteine 190/cysteine 201, and cysteine 203/cysteine 212. Asparagine 126 carries an N-linked (GlcNAc...) asparagine glycan. Residues 221–240 (VTCSTCSSFIPAALFAIILL) form a helical membrane-spanning segment. Residues 241–247 (CVNKFNY) lie on the Cytoplasmic side of the membrane.

It is found in the membrane. The protein is EGF-like domain-containing protein C02B10.3 of Caenorhabditis elegans.